The sequence spans 310 residues: Methionyl-tRNA formyltransferase (310 aa).

110-113 contacts (6S)-5,6,7,8-tetrahydrofolate; sequence SLLP.

It belongs to the Fmt family.

The catalysed reaction is L-methionyl-tRNA(fMet) + (6R)-10-formyltetrahydrofolate = N-formyl-L-methionyl-tRNA(fMet) + (6S)-5,6,7,8-tetrahydrofolate + H(+). Attaches a formyl group to the free amino group of methionyl-tRNA(fMet). The formyl group appears to play a dual role in the initiator identity of N-formylmethionyl-tRNA by promoting its recognition by IF2 and preventing the misappropriation of this tRNA by the elongation apparatus. This Clostridium acetobutylicum (strain ATCC 824 / DSM 792 / JCM 1419 / IAM 19013 / LMG 5710 / NBRC 13948 / NRRL B-527 / VKM B-1787 / 2291 / W) protein is Methionyl-tRNA formyltransferase.